The following is a 290-amino-acid chain: Pyridoxal kinase PdxY (290 aa).

Substrate contacts are provided by residues S12 and 47-48 (TQ). ATP contacts are provided by residues D114, E151, K184, and 211–214 (RPLL). Substrate is bound at residue D225.

Belongs to the pyridoxine kinase family. PdxY subfamily. Homodimer. The cofactor is Mg(2+).

It catalyses the reaction pyridoxal + ATP = pyridoxal 5'-phosphate + ADP + H(+). It functions in the pathway cofactor metabolism; pyridoxal 5'-phosphate salvage; pyridoxal 5'-phosphate from pyridoxal: step 1/1. Functionally, pyridoxal kinase involved in the salvage pathway of pyridoxal 5'-phosphate (PLP). Catalyzes the phosphorylation of pyridoxal to PLP. This Pseudomonas putida (strain ATCC 700007 / DSM 6899 / JCM 31910 / BCRC 17059 / LMG 24140 / F1) protein is Pyridoxal kinase PdxY.